The chain runs to 262 residues: Probable ketoamine kinase TTHA1179 (262 aa).

79-81 contributes to the ATP binding site; it reads AYL. Catalysis depends on aspartate 172, which acts as the Proton acceptor.

Belongs to the fructosamine kinase family.

The catalysed reaction is N(6)-(D-ribulosyl)-L-lysine + ATP = N(6)-(3-O-phospho-D-ribulosyl)-L-lysine + ADP + H(+). The enzyme catalyses N(6)-(D-erythrulosyl)-L-lysine + ATP = N(6)-(3-O-phospho-D-erythrulosyl)-L-lysine + ADP + H(+). It catalyses the reaction N(6)-D-ribulosyl-L-lysyl-[protein] + ATP = N(6)-(3-O-phospho-D-ribulosyl)-L-lysyl-[protein] + ADP + H(+). It carries out the reaction N(6)-(D-erythrulosyl)-L-lysyl-[protein] + ATP = N(6)-(3-O-phospho-D-erythrulosyl)-L-lysyl-[protein] + ADP + H(+). Ketoamine kinase that phosphorylates ketoamines, such as erythruloselysine and ribuloselysine, on the third carbon of the sugar moiety to generate ketoamine 3-phosphate. Has higher activity on free lysine (erythruloselysine and ribuloselysine), than on ribuloselysine and erythruloselysine residues on glycated proteins. The sequence is that of Probable ketoamine kinase TTHA1179 from Thermus thermophilus (strain ATCC 27634 / DSM 579 / HB8).